A 609-amino-acid polypeptide reads, in one-letter code: Arginine--tRNA ligase (609 aa).

The 'HIGH' region signature appears at A132–H142.

The protein belongs to the class-I aminoacyl-tRNA synthetase family. In terms of assembly, monomer.

It is found in the cytoplasm. The catalysed reaction is tRNA(Arg) + L-arginine + ATP = L-arginyl-tRNA(Arg) + AMP + diphosphate. The protein is Arginine--tRNA ligase of Psychrobacter arcticus (strain DSM 17307 / VKM B-2377 / 273-4).